The following is a 410-amino-acid chain: Cytochrome P450 CYP107DY1 (410 aa).

His106 and Arg110 together coordinate heme. 2 residues coordinate substrate: Thr249 and Glu253. Heme contacts are provided by Arg302, His358, and Cys360.

This sequence belongs to the cytochrome P450 family. Heme is required as a cofactor.

The enzyme catalyses mevastatin + 2 reduced [2Fe-2S]-[ferredoxin] + O2 + 2 H(+) = pravastatin lactone + 2 oxidized [2Fe-2S]-[ferredoxin] + H2O. In terms of biological role, cytochrome P450 whose physiological substrate is unknown. In vitro, is able to catalyze the selective hydroxylation of mevastatin to pravastatin, the widely used therapeutic agent for hypercholesterolemia. This chain is Cytochrome P450 CYP107DY1, found in Priestia megaterium (strain ATCC 12872 / QMB1551) (Bacillus megaterium).